Here is an 89-residue protein sequence, read N- to C-terminus: Small ribosomal subunit protein uS15 (89 aa).

The protein belongs to the universal ribosomal protein uS15 family. As to quaternary structure, part of the 30S ribosomal subunit. Forms a bridge to the 50S subunit in the 70S ribosome, contacting the 23S rRNA.

One of the primary rRNA binding proteins, it binds directly to 16S rRNA where it helps nucleate assembly of the platform of the 30S subunit by binding and bridging several RNA helices of the 16S rRNA. Functionally, forms an intersubunit bridge (bridge B4) with the 23S rRNA of the 50S subunit in the ribosome. The sequence is that of Small ribosomal subunit protein uS15 from Mannheimia succiniciproducens (strain KCTC 0769BP / MBEL55E).